The sequence spans 102 residues: NADH-quinone oxidoreductase subunit K 1 (102 aa).

The next 3 helical transmembrane spans lie at 5 to 25 (LSHY…GIFL), 31 to 51 (IVIL…MVAF), and 65 to 85 (LFIL…LVVF).

This sequence belongs to the complex I subunit 4L family. In terms of assembly, NDH-1 is composed of 14 different subunits. Subunits NuoA, H, J, K, L, M, N constitute the membrane sector of the complex.

The protein localises to the cell inner membrane. The catalysed reaction is a quinone + NADH + 5 H(+)(in) = a quinol + NAD(+) + 4 H(+)(out). NDH-1 shuttles electrons from NADH, via FMN and iron-sulfur (Fe-S) centers, to quinones in the respiratory chain. The immediate electron acceptor for the enzyme in this species is believed to be ubiquinone. Couples the redox reaction to proton translocation (for every two electrons transferred, four hydrogen ions are translocated across the cytoplasmic membrane), and thus conserves the redox energy in a proton gradient. This chain is NADH-quinone oxidoreductase subunit K 1, found in Rhizobium etli (strain ATCC 51251 / DSM 11541 / JCM 21823 / NBRC 15573 / CFN 42).